The sequence spans 1543 residues: Rho guanine nucleotide exchange factor 12 (1543 aa).

The disordered stretch occupies residues 1-62; that stretch reads MSGTQSTITD…KTKSSSEESR (62 aa). At Ser2 the chain carries N-acetylserine. Residues 28–45 show a composition bias toward basic and acidic residues; it reads SPTDKKQKVERSSSHDFD. Ser41 carries the phosphoserine modification. The PDZ domain maps to 72–151; that stretch reads CVIIQKDDNG…LTVQGRPPGS (80 aa). A coiled-coil region spans residues 194-262; sequence VGEENNVVHN…LSKATGSAQD (69 aa). Positions 281-355 are disordered; sequence AEADPGDGLC…GAPHIIGAED (75 aa). The span at 293-312 shows a compositional bias: low complexity; that stretch reads DWSSGDASRPSSDSADSPKS. Residue Ser309 is modified to Phosphoserine. The segment covering 313-329 has biased composition (basic and acidic residues); the sequence is SLRERSYLEEAPERSEG. Ser341 is subject to Phosphoserine. The RGSL domain occupies 367-558; that stretch reads GQCSCFQSIE…LMYMKYLGVK (192 aa). A disordered region spans residues 574 to 710; it reads FLPKIKQSMK…DSTPRVPTTV (137 aa). The span at 582 to 592 shows a compositional bias: basic and acidic residues; sequence MKKDREGEEKG. Residue Ser637 is modified to Phosphoserine. Low complexity predominate over residues 663–676; it reads ASSMSSATSGTALS. Position 736 is a phosphothreonine (Thr736). The DH domain maps to 787–977; sequence KRQEVINELF…RQILNYVNQA (191 aa). Positions 981–1004 form a coiled coil; the sequence is AENKQRLEDYQRRLDTSNLKLSEY. Residues 1019-1132 form the PH domain; that stretch reads KMIHEGPLVW…WQDLICRMAA (114 aa). The segment at 1137–1158 is disordered; it reads QSTKPIPLPQPPPCEGDNDEEE. Phosphoserine occurs at positions 1288, 1327, and 1377. Disordered stretches follow at residues 1386–1405 and 1441–1468; these read EAHS…KEEK and PVTG…GPVS. Over residues 1450–1460 the composition is skewed to polar residues; sequence SSHQQQHSPQN. 2 positions are modified to phosphoserine: Ser1457 and Ser1540.

In terms of assembly, interacts with GNA12 and GNA13, probably through the RGS-like domain, with RHOA, PLXNB1 and PLXNB2, and through its PDZ domain with IGF1R beta subunit. Interacts with GCSAM. Found in a complex with ARHGEF11 and ARHGEF12; binding to ARHGEF11 and ARHGEF12 enhances CDC42 GEF activity of PLEKHG4B, and PLEKHG4B, in turn, inhibits ARHGEF11- and ARHGEF12-mediated RHOA activation. As to expression, expressed in brain, predominantly in neuronal cell bodies.

Its subcellular location is the cytoplasm. The protein localises to the membrane. Functionally, may play a role in the regulation of RhoA GTPase by guanine nucleotide-binding alpha-12 (GNA12) and alpha-13 (GNA13). Acts as guanine nucleotide exchange factor (GEF) for RhoA GTPase and may act as GTPase-activating protein (GAP) for GNA12 and GNA13. The sequence is that of Rho guanine nucleotide exchange factor 12 (Arhgef12) from Mus musculus (Mouse).